The sequence spans 339 residues: Phenylalanine--tRNA ligase alpha subunit (339 aa).

Glu-253 is a binding site for Mg(2+).

It belongs to the class-II aminoacyl-tRNA synthetase family. Phe-tRNA synthetase alpha subunit type 1 subfamily. Tetramer of two alpha and two beta subunits. Mg(2+) serves as cofactor.

The protein localises to the cytoplasm. It catalyses the reaction tRNA(Phe) + L-phenylalanine + ATP = L-phenylalanyl-tRNA(Phe) + AMP + diphosphate + H(+). This chain is Phenylalanine--tRNA ligase alpha subunit, found in Thioalkalivibrio sulfidiphilus (strain HL-EbGR7).